Here is a 234-residue protein sequence, read N- to C-terminus: Enolase-phosphatase E1 (234 aa).

Mg(2+)-binding residues include aspartate 10 and glutamate 12. Substrate-binding positions include 125–126 and lysine 162; that span reads SS. Mg(2+) is bound at residue aspartate 188.

It belongs to the HAD-like hydrolase superfamily. MasA/MtnC family. In terms of assembly, monomer. Mg(2+) serves as cofactor.

It localises to the cytoplasm. The protein localises to the nucleus. The enzyme catalyses 5-methylsulfanyl-2,3-dioxopentyl phosphate + H2O = 1,2-dihydroxy-5-(methylsulfanyl)pent-1-en-3-one + phosphate. It functions in the pathway amino-acid biosynthesis; L-methionine biosynthesis via salvage pathway; L-methionine from S-methyl-5-thio-alpha-D-ribose 1-phosphate: step 3/6. It participates in amino-acid biosynthesis; L-methionine biosynthesis via salvage pathway; L-methionine from S-methyl-5-thio-alpha-D-ribose 1-phosphate: step 4/6. Functionally, bifunctional enzyme that catalyzes the enolization of 2,3-diketo-5-methylthiopentyl-1-phosphate (DK-MTP-1-P) into the intermediate 2-hydroxy-3-keto-5-methylthiopentenyl-1-phosphate (HK-MTPenyl-1-P), which is then dephosphorylated to form the acireductone 1,2-dihydroxy-3-keto-5-methylthiopentene (DHK-MTPene). The protein is Enolase-phosphatase E1 (utr4) of Neurospora crassa (strain ATCC 24698 / 74-OR23-1A / CBS 708.71 / DSM 1257 / FGSC 987).